The following is a 101-amino-acid chain: Small ribosomal subunit protein uS10 (101 aa).

It belongs to the universal ribosomal protein uS10 family. Part of the 30S ribosomal subunit.

In terms of biological role, involved in the binding of tRNA to the ribosomes. The protein is Small ribosomal subunit protein uS10 of Rhodococcus erythropolis (strain PR4 / NBRC 100887).